An 852-amino-acid polypeptide reads, in one-letter code: Leucine--tRNA ligase (852 aa).

Positions proline 42–histidine 52 match the 'HIGH' region motif. The tract at residues asparagine 586–glutamate 606 is disordered. The 'KMSKS' region signature appears at lysine 614–serine 618. Residue lysine 617 coordinates ATP.

This sequence belongs to the class-I aminoacyl-tRNA synthetase family.

It localises to the cytoplasm. The enzyme catalyses tRNA(Leu) + L-leucine + ATP = L-leucyl-tRNA(Leu) + AMP + diphosphate. This chain is Leucine--tRNA ligase, found in Picosynechococcus sp. (strain ATCC 27264 / PCC 7002 / PR-6) (Agmenellum quadruplicatum).